Here is a 249-residue protein sequence, read N- to C-terminus: ATP synthase subunit a, chloroplastic (249 aa).

5 helical membrane-spanning segments follow: residues 40-60 (QVLITSWVVIAILLGSAVLAI), 97-117 (VPFIGTLFLFIFVSNWSGALL), 136-156 (INTTVALALLTSAAYFYAGLS), 201-221 (LVVVVLVSLVPLVVPIPVMFL), and 222-242 (GLFTSGIQALIFATLAAAYIG).

Belongs to the ATPase A chain family. In terms of assembly, F-type ATPases have 2 components, CF(1) - the catalytic core - and CF(0) - the membrane proton channel. CF(1) has five subunits: alpha(3), beta(3), gamma(1), delta(1), epsilon(1). CF(0) has four main subunits: a, b, b' and c.

Its subcellular location is the plastid. It localises to the chloroplast thylakoid membrane. Functionally, key component of the proton channel; it plays a direct role in the translocation of protons across the membrane. The protein is ATP synthase subunit a, chloroplastic of Capsella bursa-pastoris (Shepherd's purse).